The following is a 502-amino-acid chain: MQTDCDVLIAGNGLAALTLALSLPESFRIVILCKNRLDDTASRHAQGGIAAAWSGEDDIEKHVADTLEAGAGLCDEAAVRAILSQGKPAIEWLLAQGVAFDRNHNGLHLTREGGHTCRRIAHVADYTGEAVMQSLIAQIRRRPNIRVCERQMALDIQTESGAACGLTVLDCRTQETYRIRARHTVLAGGGLGQIYAATTTPPECTGDAIAMAIRAGCAVGNLEFIQFHPTGLARPSENGRTFLISEAVRGEGGILTNQAGERFMPHYDRRAELAPRDIVARAIAAEIAKQTQDFVSLDISHQPAAFVRRHFPSIHRHCLSQCGLDITRQAIPVRPVQHYTCGGIQTDPCGRTSLPQLYALGETACTGLHGANRLASNSLLECVVTARLCAQAIADGQAFQAEPFQRPSESLSAEAGIFSDDLQNTFSRPVLQTFNQRHLGILRNDTGLRRAIAQLQLWKQNQAEPHTASEYENRNLLECSLAVAQAAYRRRQNIGAHFNSDC.

FAD-binding positions include 12-15 (NGLA), lysine 34, 41-48 (ASRHAQGG), and aspartate 207. Residue arginine 276 is the Proton donor/acceptor of the active site. Residues glutamate 362 and 378-379 (SL) contribute to the FAD site.

It belongs to the FAD-dependent oxidoreductase 2 family. NadB subfamily. FAD serves as cofactor.

The protein localises to the cytoplasm. The catalysed reaction is L-aspartate + O2 = iminosuccinate + H2O2. The protein operates within cofactor biosynthesis; NAD(+) biosynthesis; iminoaspartate from L-aspartate (oxidase route): step 1/1. In terms of biological role, catalyzes the oxidation of L-aspartate to iminoaspartate, the first step in the de novo biosynthesis of NAD(+). This chain is L-aspartate oxidase (nadB), found in Neisseria meningitidis serogroup B (strain ATCC BAA-335 / MC58).